The following is a 445-amino-acid chain: GTPase Der (445 aa).

EngA-type G domains follow at residues 3 to 167 (PVIA…YAGQ) and 180 to 353 (IKIA…AAAM). Residues 9-16 (GRPNVGKS), 56-60 (DTGGF), 119-122 (NKAE), 186-193 (GRPNVGKS), 233-237 (DTAGL), and 298-301 (NKWD) each bind GTP. Positions 354 to 438 (AKLPTPKLTR…PLRIEFRSSN (85 aa)) constitute a KH-like domain.

Belongs to the TRAFAC class TrmE-Era-EngA-EngB-Septin-like GTPase superfamily. EngA (Der) GTPase family. In terms of assembly, associates with the 50S ribosomal subunit.

In terms of biological role, GTPase that plays an essential role in the late steps of ribosome biogenesis. The sequence is that of GTPase Der from Burkholderia cenocepacia (strain HI2424).